We begin with the raw amino-acid sequence, 141 residues long: Small ribosomal subunit protein uS8 (141 aa).

This sequence belongs to the universal ribosomal protein uS8 family. As to quaternary structure, part of the 30S ribosomal subunit. Contacts proteins S5 and S12.

One of the primary rRNA binding proteins, it binds directly to 16S rRNA central domain where it helps coordinate assembly of the platform of the 30S subunit. In Mycoplasma genitalium (strain ATCC 33530 / DSM 19775 / NCTC 10195 / G37) (Mycoplasmoides genitalium), this protein is Small ribosomal subunit protein uS8.